A 465-amino-acid chain; its full sequence is Phospholipase A1-II 5 (465 aa).

The active-site Acyl-ester intermediate is Ser233. Active-site charge relay system residues include Ser233, Asp297, and His336.

The protein belongs to the AB hydrolase superfamily. Lipase family.

It is found in the cytoplasm. Acylhydrolase that catalyzes the hydrolysis of phospholipids at the sn-1 position. This chain is Phospholipase A1-II 5, found in Oryza sativa subsp. japonica (Rice).